Reading from the N-terminus, the 212-residue chain is Probable GTP-binding protein EngB (212 aa).

In terms of domain architecture, EngB-type G spans 38 to 210; sequence SLPEIAFVGK…KASLAKCIKP (173 aa). Residues 46–53, 73–77, 91–94, 158–161, and 189–191 contribute to the GTP site; these read GKSNVGKS, GRTRQ, DLPG, TKSD, and VSN. Mg(2+)-binding residues include Ser-53 and Thr-75.

Belongs to the TRAFAC class TrmE-Era-EngA-EngB-Septin-like GTPase superfamily. EngB GTPase family. The cofactor is Mg(2+).

Its function is as follows. Necessary for normal cell division and for the maintenance of normal septation. This is Probable GTP-binding protein EngB from Rickettsia conorii (strain ATCC VR-613 / Malish 7).